A 596-amino-acid polypeptide reads, in one-letter code: Transketolase-like protein 1 (596 aa).

His-46 contacts substrate. Residues Ser-49 and 94 to 96 (GWL) each bind thiamine diphosphate. Asp-126 is a Mg(2+) binding site. Residues Gly-127 and Asn-156 each contribute to the thiamine diphosphate site. Mg(2+)-binding residues include Asn-156 and Leu-158. Thiamine diphosphate is bound by residues Lys-218 and His-232. Positions 232, 292, and 319 each coordinate substrate. 2 residues coordinate thiamine diphosphate: Glu-340 and Phe-366. Glu-340 (proton donor) is an active-site residue. Residues His-390 and Asp-398 each coordinate substrate. Residue Gln-402 coordinates thiamine diphosphate. Arg-448 is a substrate binding site.

The protein belongs to the transketolase family. Homodimer. Mg(2+) serves as cofactor. It depends on Ca(2+) as a cofactor. The cofactor is Mn(2+). Co(2+) is required as a cofactor. Requires thiamine diphosphate as cofactor. Widely expressed. Expressed in endothelial cells and in peripheral neurons (at protein level). As to expression, not expressed in fetal neocortex. In terms of tissue distribution, expressed in fetal neocortex.

It is found in the cytoplasm. The enzyme catalyses D-sedoheptulose 7-phosphate + D-glyceraldehyde 3-phosphate = aldehydo-D-ribose 5-phosphate + D-xylulose 5-phosphate. Functionally, catalyzes the transfer of a two-carbon ketol group from a ketose donor to an aldose acceptor, via a covalent intermediate with the cofactor thiamine pyrophosphate. During fetal neocortex development, may be essential to maintain the full number of basal radial glia (bRG). bRG are neural progenitor cells that undergo asymmetric divisions, generating a bRG (self-renewal) and a neuron, in contrast to basal intermediate progenitors (bIPs), which typically divide once to give rise to 2 neurons. bRG generate more cortical neurons over time than bIPs. This chain is Transketolase-like protein 1 (TKTL1), found in Homo sapiens (Human).